A 520-amino-acid chain; its full sequence is Maturase K (520 aa).

It belongs to the intron maturase 2 family. MatK subfamily.

The protein localises to the plastid. Its subcellular location is the chloroplast. Its function is as follows. Usually encoded in the trnK tRNA gene intron. Probably assists in splicing its own and other chloroplast group II introns. This Aspidistra elatior (Cast-iron plant) protein is Maturase K.